We begin with the raw amino-acid sequence, 158 residues long: Putative tyrosine-protein phosphatase OCA1 (158 aa).

The region spanning 7–158 (NYGMVEENFY…DEELVFGASY (152 aa)) is the Tyrosine-protein phosphatase domain. Cysteine 99 acts as the Phosphocysteine intermediate in catalysis.

Belongs to the protein-tyrosine phosphatase family.

The protein resides in the cytoplasm. It carries out the reaction O-phospho-L-tyrosyl-[protein] + H2O = L-tyrosyl-[protein] + phosphate. In terms of biological role, putative tyrosine-protein phosphatase required for protection against superoxide stress. The protein is Putative tyrosine-protein phosphatase OCA1 (OCA1) of Mycosarcoma maydis (Corn smut fungus).